The chain runs to 310 residues: Protease HtpX homolog (310 aa).

A run of 2 helical transmembrane segments spans residues 16–36 (NAVLTTYCAIFAFIGLLVDAI) and 55–75 (IFPTITIVMFVVAFVIILVCI). Residue histidine 166 participates in Zn(2+) binding. The active site involves glutamate 167. Histidine 170 provides a ligand contact to Zn(2+). 2 helical membrane-spanning segments follow: residues 182–202 (VGILSNIMLLVANFSVYFFMG) and 214–234 (MILWVLQIILPFLTLLLQMYL). Position 239 (glutamate 239) interacts with Zn(2+).

Belongs to the peptidase M48B family. Requires Zn(2+) as cofactor.

The protein resides in the cell inner membrane. The protein is Protease HtpX homolog of Helicobacter pylori (strain J99 / ATCC 700824) (Campylobacter pylori J99).